The primary structure comprises 160 residues: Major pollen allergen Aln g 1 (160 aa).

This sequence belongs to the BetVI family.

This chain is Major pollen allergen Aln g 1, found in Alnus glutinosa (European alder).